Reading from the N-terminus, the 281-residue chain is Shikimate dehydrogenase (NADP(+)) (281 aa).

Shikimate-binding positions include 15 to 17 and T62; that span reads SKS. K66 (proton acceptor) is an active-site residue. The shikimate site is built by N87 and D102. NADP(+) contacts are provided by residues 127–131, 151–156, and L217; these read GAGGS and NRTPER. Y219 serves as a coordination point for shikimate. G241 is an NADP(+) binding site.

This sequence belongs to the shikimate dehydrogenase family. As to quaternary structure, homodimer.

The enzyme catalyses shikimate + NADP(+) = 3-dehydroshikimate + NADPH + H(+). It functions in the pathway metabolic intermediate biosynthesis; chorismate biosynthesis; chorismate from D-erythrose 4-phosphate and phosphoenolpyruvate: step 4/7. Its function is as follows. Involved in the biosynthesis of the chorismate, which leads to the biosynthesis of aromatic amino acids. Catalyzes the reversible NADPH linked reduction of 3-dehydroshikimate (DHSA) to yield shikimate (SA). The polypeptide is Shikimate dehydrogenase (NADP(+)) (Stenotrophomonas maltophilia (strain R551-3)).